Reading from the N-terminus, the 1372-residue chain is DNA-directed RNA polymerase subunit beta (1372 aa).

The protein belongs to the RNA polymerase beta chain family. As to quaternary structure, the RNAP catalytic core consists of 2 alpha, 1 beta, 1 beta' and 1 omega subunit. When a sigma factor is associated with the core the holoenzyme is formed, which can initiate transcription.

The enzyme catalyses RNA(n) + a ribonucleoside 5'-triphosphate = RNA(n+1) + diphosphate. Functionally, DNA-dependent RNA polymerase catalyzes the transcription of DNA into RNA using the four ribonucleoside triphosphates as substrates. The sequence is that of DNA-directed RNA polymerase subunit beta from Nitratidesulfovibrio vulgaris (strain ATCC 29579 / DSM 644 / CCUG 34227 / NCIMB 8303 / VKM B-1760 / Hildenborough) (Desulfovibrio vulgaris).